We begin with the raw amino-acid sequence, 465 residues long: Ribulose bisphosphate carboxylase large chain (465 aa).

Position 4 is an N6,N6,N6-trimethyllysine (K4). 2 residues coordinate substrate: N113 and T163. K165 acts as the Proton acceptor in catalysis. Position 167 (K167) interacts with substrate. Positions 191, 193, and 194 each coordinate Mg(2+). An N6-carboxylysine modification is found at K191. The Proton acceptor role is filled by H284. R285, H317, and S369 together coordinate substrate.

Belongs to the RuBisCO large chain family. Type I subfamily. As to quaternary structure, heterohexadecamer of 8 large chains and 8 small chains; disulfide-linked. The disulfide link is formed within the large subunit homodimers. It depends on Mg(2+) as a cofactor. The disulfide bond which can form in the large chain dimeric partners within the hexadecamer appears to be associated with oxidative stress and protein turnover.

The protein localises to the plastid. The protein resides in the chloroplast. It catalyses the reaction 2 (2R)-3-phosphoglycerate + 2 H(+) = D-ribulose 1,5-bisphosphate + CO2 + H2O. The enzyme catalyses D-ribulose 1,5-bisphosphate + O2 = 2-phosphoglycolate + (2R)-3-phosphoglycerate + 2 H(+). Functionally, ruBisCO catalyzes two reactions: the carboxylation of D-ribulose 1,5-bisphosphate, the primary event in carbon dioxide fixation, as well as the oxidative fragmentation of the pentose substrate in the photorespiration process. Both reactions occur simultaneously and in competition at the same active site. The protein is Ribulose bisphosphate carboxylase large chain of Casuarina equisetifolia (Beach she-oak).